The primary structure comprises 657 residues: MLPKIFYLSLLPAALGHPHLQPRLDNGLARTPQMGWNTYNHYSCSPNETIVRSNAQALVDLGLASLGYRYVTTDCGWTVADRLSDGSLTWNETLFPKGFPALGKYLHDLDLLFGVYQDSGIKLCGSPPDNVGSLYHEDQDARTFASWEVDSLKYDNCYSDAATGYPNVNYEPSTSPQPRFANMSRALAAQNRSMVFQVCEWGIDFPARWAPALGHSWRIGNDIIPHWRAIYRTLNQAVPQTSFAGPGQWPDLDMLFVGNDILSIPEEQTHFSLWAILKSPLTIGAALKDDNTSINDESLQILKQEEVIGYNQDSLGVSASLRRRWTEEGYEVWSGPLSGGRTVAALINWKDEARELTLDLPDIGLQFAGTVKNIWDGTTAQNVKTSYTAKVQSHGTILLELQDTTASGQYPTDTFATSTDSSTTFESIYGVTTSFRYNITVKLSEASSSGDVNIQSTASNKTITAQVSASGTEASAQIPLLAGSSNSITIVSPQSVDAITITPPNGTYFPNTAFTTTGDADTVSCGAGYCQPVGSKIGNISTNGTARAVIPATAGTKYLAIDYINNDVAFDSAWDWGSNSRNLTVSVNGNKPVRIEVPLSGQHSELFGPGKGWWDTATIGVLTEGWKDGDNDVVIGNEGGESGFTSYGPDFVGLRVL.

The N-terminal stretch at 1–16 (MLPKIFYLSLLPAALG) is a signal peptide. 2 N-linked (GlcNAc...) asparagine glycosylation sites follow: N47 and N91. A disulfide bridge connects residues C124 and C157. Catalysis depends on D155, which acts as the Nucleophile. Residues N182 and N191 are each glycosylated (N-linked (GlcNAc...) asparagine). 200-204 (EWGID) contributes to the substrate binding site. Catalysis depends on D222, which acts as the Proton donor. Residues N291, N438, N460, N505, N539, N543, and N582 are each glycosylated (N-linked (GlcNAc...) asparagine).

This sequence belongs to the glycosyl hydrolase 27 family.

The protein localises to the secreted. The enzyme catalyses Hydrolysis of terminal, non-reducing alpha-D-galactose residues in alpha-D-galactosides, including galactose oligosaccharides, galactomannans and galactolipids.. Its function is as follows. Hydrolyzes a variety of simple alpha-D-galactoside as well as more complex molecules such as oligosaccharides and polysaccharides. This Aspergillus oryzae (strain ATCC 42149 / RIB 40) (Yellow koji mold) protein is Probable alpha-galactosidase D (aglD).